A 384-amino-acid polypeptide reads, in one-letter code: Dual-specificity RNA methyltransferase RlmN (384 aa).

The active-site Proton acceptor is the Glu-105. The region spanning 111–350 is the Radical SAM core domain; the sequence is EDDRATLCVS…TIVRKTRGDD (240 aa). Cys-118 and Cys-355 are oxidised to a cystine. Cys-125, Cys-129, and Cys-132 together coordinate [4Fe-4S] cluster. S-adenosyl-L-methionine contacts are provided by residues 179 to 180, Ser-211, 233 to 235, and Asn-312; these read GE and SLH. The active-site S-methylcysteine intermediate is Cys-355.

This sequence belongs to the radical SAM superfamily. RlmN family. [4Fe-4S] cluster is required as a cofactor.

It localises to the cytoplasm. The catalysed reaction is adenosine(2503) in 23S rRNA + 2 reduced [2Fe-2S]-[ferredoxin] + 2 S-adenosyl-L-methionine = 2-methyladenosine(2503) in 23S rRNA + 5'-deoxyadenosine + L-methionine + 2 oxidized [2Fe-2S]-[ferredoxin] + S-adenosyl-L-homocysteine. The enzyme catalyses adenosine(37) in tRNA + 2 reduced [2Fe-2S]-[ferredoxin] + 2 S-adenosyl-L-methionine = 2-methyladenosine(37) in tRNA + 5'-deoxyadenosine + L-methionine + 2 oxidized [2Fe-2S]-[ferredoxin] + S-adenosyl-L-homocysteine. Its function is as follows. Specifically methylates position 2 of adenine 2503 in 23S rRNA and position 2 of adenine 37 in tRNAs. m2A2503 modification seems to play a crucial role in the proofreading step occurring at the peptidyl transferase center and thus would serve to optimize ribosomal fidelity. The chain is Dual-specificity RNA methyltransferase RlmN from Escherichia coli O17:K52:H18 (strain UMN026 / ExPEC).